We begin with the raw amino-acid sequence, 199 residues long: Dephospho-CoA kinase (199 aa).

Residues 3-199 (VIGLTGSIGM…AAAKMPRRRS (197 aa)) enclose the DPCK domain. Residue 11–16 (GMGKST) coordinates ATP.

This sequence belongs to the CoaE family.

Its subcellular location is the cytoplasm. It carries out the reaction 3'-dephospho-CoA + ATP = ADP + CoA + H(+). Its pathway is cofactor biosynthesis; coenzyme A biosynthesis; CoA from (R)-pantothenate: step 5/5. Functionally, catalyzes the phosphorylation of the 3'-hydroxyl group of dephosphocoenzyme A to form coenzyme A. The protein is Dephospho-CoA kinase of Nitrobacter winogradskyi (strain ATCC 25391 / DSM 10237 / CIP 104748 / NCIMB 11846 / Nb-255).